A 42-amino-acid chain; its full sequence is VQHPPKIQVYSRHPAZBGKPBFLBCYVSGFHPXZIZIBLLKB.

The Ig-like C1-type domain occupies 5–42; sequence PKIQVYSRHPAZBGKPBFLBCYVSGFHPXZIZIBLLKB.

In terms of assembly, heterodimer of an alpha chain and a beta chain. Beta-2-microglobulin is the beta-chain of major histocompatibility complex class I molecules.

The protein localises to the secreted. Component of the class I major histocompatibility complex (MHC). Involved in the presentation of peptide antigens to the immune system. The sequence is that of Beta-2-microglobulin (B2M) from Canis lupus familiaris (Dog).